A 128-amino-acid polypeptide reads, in one-letter code: MQKRVRNRLITIIICFCSACLGISIILYNLEKNIVFFLPPSKINAIEQGKELRVGGLVKTDSINKIADDKISFVITDNIKDFEILYQGALPALFRKGQGIIAIGQLSNGKFIARQLLAKHDENYRPPQ.

Topologically, residues 1–8 are cytoplasmic; it reads MQKRVRNR. Residues 9–29 form a helical; Signal-anchor for type II membrane protein membrane-spanning segment; the sequence is LITIIICFCSACLGISIILYN. The Periplasmic portion of the chain corresponds to 30 to 128; the sequence is LEKNIVFFLP…KHDENYRPPQ (99 aa). Residues His120 and Tyr124 each coordinate heme.

It belongs to the CcmE/CycJ family.

The protein resides in the cell inner membrane. Functionally, heme chaperone required for the biogenesis of c-type cytochromes. Transiently binds heme delivered by CcmC and transfers the heme to apo-cytochromes in a process facilitated by CcmF and CcmH. This Rickettsia peacockii (strain Rustic) protein is Cytochrome c-type biogenesis protein CcmE.